Consider the following 459-residue polypeptide: MNVFNDTIVSRVTSEGKSSVGIIRISGKLAFEVSIKVLNRDYLPIRTACYLSFLDLSGKIIDQGIVLWFPGPSSFTGEDVLELQGHGNPIIIDLLITTILSIPGIRLANPGEFSERAFLNGKIDLAQAESISDLINATSEQAARSAMQSLQGLFSIYINNLIKDFTKFRAKIEAQINFSDHEINADNLDVFIEHEINRIISRIKKIRNTAIQGSVLREGIKVVISGAPNSGKSSLLNALSLTNRAIVTNFPGTTRDVIYENIIINGVLFILIDTAGLRITNNPIENIGIERAWNEIKLAEHILFVIDGSRSVQNQLKNYNNFIKSLSKTSCITIVFNKSDLSKFKINSDLRNLNNGVLVSSKTGVGIEALRQHLYFSFKSSFEVNNSEGVVSARRRHINILSMVLEKFLSSKKDWKKINNIELLADDLRTCQDLLGGITGKITSDELLSEIFSEFCIGK.

The (6S)-5-formyl-5,6,7,8-tetrahydrofolate site is built by arginine 24, glutamate 82, and lysine 122. Residues 219–379 (GIKVVISGAP…LRQHLYFSFK (161 aa)) form the TrmE-type G domain. GTP is bound by residues 229 to 234 (NSGKSS), 248 to 254 (TNFPGTT), and 273 to 276 (DTAG). Mg(2+)-binding residues include serine 233 and threonine 254. Lysine 459 is a (6S)-5-formyl-5,6,7,8-tetrahydrofolate binding site.

The protein belongs to the TRAFAC class TrmE-Era-EngA-EngB-Septin-like GTPase superfamily. TrmE GTPase family. Homodimer. Heterotetramer of two MnmE and two MnmG subunits. It depends on K(+) as a cofactor.

The protein resides in the cytoplasm. Its function is as follows. Exhibits a very high intrinsic GTPase hydrolysis rate. Involved in the addition of a carboxymethylaminomethyl (cmnm) group at the wobble position (U34) of certain tRNAs, forming tRNA-cmnm(5)s(2)U34. The chain is tRNA modification GTPase MnmE from Buchnera aphidicola subsp. Baizongia pistaciae (strain Bp).